The following is a 142-amino-acid chain: HTH-type transcriptional regulator MntR (142 aa).

The HTH dtxR-type domain maps to 1–63; it reads MPTPSMEDYI…YEKYRGLVLT (63 aa). 6 residues coordinate Mn(2+): Asp-8, Glu-11, His-77, Glu-99, Glu-102, and His-103.

It belongs to the DtxR/MntR family. In terms of assembly, homodimer.

The protein localises to the cytoplasm. Its activity is regulated as follows. DNA binding is strongly activated by Mn(2+). Its function is as follows. Central regulator of manganese homeostasis. The protein is HTH-type transcriptional regulator MntR of Bacillus cereus (strain G9842).